A 417-amino-acid chain; its full sequence is 4-hydroxy-3-methylbut-2-en-1-yl diphosphate synthase (flavodoxin) (417 aa).

[4Fe-4S] cluster is bound by residues C304, C307, C350, and E357.

The protein belongs to the IspG family. [4Fe-4S] cluster is required as a cofactor.

The enzyme catalyses (2E)-4-hydroxy-3-methylbut-2-enyl diphosphate + oxidized [flavodoxin] + H2O + 2 H(+) = 2-C-methyl-D-erythritol 2,4-cyclic diphosphate + reduced [flavodoxin]. It participates in isoprenoid biosynthesis; isopentenyl diphosphate biosynthesis via DXP pathway; isopentenyl diphosphate from 1-deoxy-D-xylulose 5-phosphate: step 5/6. In terms of biological role, converts 2C-methyl-D-erythritol 2,4-cyclodiphosphate (ME-2,4cPP) into 1-hydroxy-2-methyl-2-(E)-butenyl 4-diphosphate. The protein is 4-hydroxy-3-methylbut-2-en-1-yl diphosphate synthase (flavodoxin) of Rhizobium rhizogenes (strain K84 / ATCC BAA-868) (Agrobacterium radiobacter).